The sequence spans 240 residues: Proline-rich antigen homolog (240 aa).

2 stretches are compositionally biased toward pro residues: residues 1–31 (MTEQ…PAAP) and 38–78 (APPP…PPGP). The disordered stretch occupies residues 1–78 (MTEQPPPGGS…GGYAPPPPGP (78 aa)). The RDD domain maps to 89-233 (TPWITRVLAA…KRQTLADKIM (145 aa)). A run of 3 helical transmembrane segments spans residues 98–118 (AFID…IMLV), 142–162 (SMIG…YLVW), and 203–223 (LAHF…LWDA).

Belongs to the mycobacterial Pra family.

Its subcellular location is the cell membrane. This is Proline-rich antigen homolog from Mycobacterium tuberculosis (strain CDC 1551 / Oshkosh).